We begin with the raw amino-acid sequence, 84 residues long: Putative defensin-like protein 139 (84 aa).

An N-terminal signal peptide occupies residues 1-28 (MEPSNQIFFYLRRSKLLSGLGEIRMAKG). 4 disulfides stabilise this stretch: Cys-37–Cys-81, Cys-46–Cys-65, Cys-51–Cys-75, and Cys-55–Cys-77.

Belongs to the DEFL family.

The protein resides in the secreted. The protein is Putative defensin-like protein 139 (LCR7) of Arabidopsis thaliana (Mouse-ear cress).